Here is an 80-residue protein sequence, read N- to C-terminus: ALRGFGVIDSIKTQIEAICNQTVSCADILTVAARDSVVALGGPSWTVPLGRRDSIDANEAEANSDLPGFNSSRSELEAAF.

The tract at residues aspartate 56–phenylalanine 80 is disordered. Residue proline 67 coordinates substrate. A glycan (N-linked (GlcNAc...) asparagine) is linked at asparagine 70.

The protein belongs to the peroxidase family. Classical plant (class III) peroxidase subfamily. The cofactor is Ca(2+). Requires heme b as cofactor.

The enzyme catalyses 2 a phenolic donor + H2O2 = 2 a phenolic radical donor + 2 H2O. Its function is as follows. Removal of H(2)O(2), oxidation of toxic reductants, biosynthesis and degradation of lignin, suberization, auxin catabolism, response to environmental stresses such as wounding, pathogen attack and oxidative stress. These functions might be dependent on each isozyme/isoform in each plant tissue. This Triticum aestivum (Wheat) protein is Peroxidase.